Consider the following 101-residue polypeptide: NAD(P)H-quinone oxidoreductase subunit 4L, chloroplastic (101 aa).

3 helical membrane passes run 2–22 (ILEH…YGLI), 32–52 (MCLE…SDFF), and 61–81 (IFSI…LAIV).

Belongs to the complex I subunit 4L family. In terms of assembly, NDH is composed of at least 16 different subunits, 5 of which are encoded in the nucleus.

The protein resides in the plastid. The protein localises to the chloroplast thylakoid membrane. The catalysed reaction is a plastoquinone + NADH + (n+1) H(+)(in) = a plastoquinol + NAD(+) + n H(+)(out). It catalyses the reaction a plastoquinone + NADPH + (n+1) H(+)(in) = a plastoquinol + NADP(+) + n H(+)(out). Its function is as follows. NDH shuttles electrons from NAD(P)H:plastoquinone, via FMN and iron-sulfur (Fe-S) centers, to quinones in the photosynthetic chain and possibly in a chloroplast respiratory chain. The immediate electron acceptor for the enzyme in this species is believed to be plastoquinone. Couples the redox reaction to proton translocation, and thus conserves the redox energy in a proton gradient. This Nicotiana sylvestris (Wood tobacco) protein is NAD(P)H-quinone oxidoreductase subunit 4L, chloroplastic.